A 142-amino-acid chain; its full sequence is Universal stress protein C (142 aa).

This sequence belongs to the universal stress protein A family.

Its subcellular location is the cytoplasm. Its function is as follows. Required for resistance to DNA-damaging agents. The protein is Universal stress protein C (uspC) of Escherichia coli O157:H7.